Consider the following 219-residue polypeptide: 2-hydroxy-3-keto-5-methylthiopentenyl-1-phosphate phosphatase (219 aa).

It belongs to the HAD-like hydrolase superfamily. MtnX family.

It catalyses the reaction 2-hydroxy-5-methylsulfanyl-3-oxopent-1-enyl phosphate + H2O = 1,2-dihydroxy-5-(methylsulfanyl)pent-1-en-3-one + phosphate. Its pathway is amino-acid biosynthesis; L-methionine biosynthesis via salvage pathway; L-methionine from S-methyl-5-thio-alpha-D-ribose 1-phosphate: step 4/6. Functionally, dephosphorylates 2-hydroxy-3-keto-5-methylthiopentenyl-1-phosphate (HK-MTPenyl-1-P) yielding 1,2-dihydroxy-3-keto-5-methylthiopentene (DHK-MTPene). The polypeptide is 2-hydroxy-3-keto-5-methylthiopentenyl-1-phosphate phosphatase (Bacillus cereus (strain B4264)).